A 94-amino-acid polypeptide reads, in one-letter code: PqqA binding protein (94 aa).

Belongs to the PqqD family. Monomer. Interacts with PqqE.

The protein operates within cofactor biosynthesis; pyrroloquinoline quinone biosynthesis. Functions as a PqqA binding protein and presents PqqA to PqqE, in the pyrroloquinoline quinone (PQQ) biosynthetic pathway. The protein is PqqA binding protein of Pseudomonas syringae pv. syringae (strain B728a).